We begin with the raw amino-acid sequence, 554 residues long: Glucose-6-phosphate isomerase 2 (554 aa).

Glu-359 functions as the Proton donor in the catalytic mechanism. Catalysis depends on residues His-390 and Lys-518.

It belongs to the GPI family.

The protein localises to the cytoplasm. It catalyses the reaction alpha-D-glucose 6-phosphate = beta-D-fructose 6-phosphate. The protein operates within carbohydrate biosynthesis; gluconeogenesis. It functions in the pathway carbohydrate degradation; glycolysis; D-glyceraldehyde 3-phosphate and glycerone phosphate from D-glucose: step 2/4. Functionally, catalyzes the reversible isomerization of glucose-6-phosphate to fructose-6-phosphate. The sequence is that of Glucose-6-phosphate isomerase 2 from Pseudomonas putida (strain ATCC 47054 / DSM 6125 / CFBP 8728 / NCIMB 11950 / KT2440).